The following is a 145-amino-acid chain: Large ribosomal subunit protein cL37 (145 aa).

The transit peptide at 1–63 directs the protein to the chloroplast; sequence MALLCFNSFT…PRKNSIFIAS (63 aa). Positions 125–145 are disordered; the sequence is KRRLRKKGNWPPSKMKKLEGV.

This sequence belongs to the chloroplast-specific ribosomal protein cL37 family. In terms of assembly, part of the 50S ribosomal subunit.

It localises to the plastid. Its subcellular location is the chloroplast. The protein is Large ribosomal subunit protein cL37 (PSRP5) of Pisum sativum (Garden pea).